The chain runs to 141 residues: Transcription antitermination protein NusB (141 aa).

It belongs to the NusB family.

Its function is as follows. Involved in transcription antitermination. Required for transcription of ribosomal RNA (rRNA) genes. Binds specifically to the boxA antiterminator sequence of the ribosomal RNA (rrn) operons. In Fervidobacterium nodosum (strain ATCC 35602 / DSM 5306 / Rt17-B1), this protein is Transcription antitermination protein NusB.